The primary structure comprises 709 residues: Polyribonucleotide nucleotidyltransferase (709 aa).

Residues D482 and D488 each coordinate Mg(2+). Positions 549–608 (PRIITMSIDPDKIREVIGPGGKVINKIIAETGVKIDIEDDGRIFIAATDTEAANKAVRII) constitute a KH domain. Positions 618 to 686 (GKVYTGKVTR…KQGRINLSRK (69 aa)) constitute an S1 motif domain.

Belongs to the polyribonucleotide nucleotidyltransferase family. Mg(2+) is required as a cofactor.

The protein localises to the cytoplasm. It carries out the reaction RNA(n+1) + phosphate = RNA(n) + a ribonucleoside 5'-diphosphate. Involved in mRNA degradation. Catalyzes the phosphorolysis of single-stranded polyribonucleotides processively in the 3'- to 5'-direction. The chain is Polyribonucleotide nucleotidyltransferase from Heliobacterium modesticaldum (strain ATCC 51547 / Ice1).